The following is a 222-amino-acid chain: Ornithine decarboxylase antizyme 1 (222 aa).

The protein belongs to the ODC antizyme family. Interacts with ODC1 and thereby sterically blocks ODC homodimerization. Forms a ternary complex with PSMB4 and OAZ1 before PSMB4 is incorporated into the 20S proteasome. Interacts with AZIN2; this interaction disrupts the interaction between the antizyme and ODC1. Interacts with FAM171A1.

Ornithine decarboxylase (ODC) antizyme protein that negatively regulates ODC activity and intracellular polyamine biosynthesis and uptake in response to increased intracellular polyamine levels. Binds to ODC monomers, inhibiting the assembly of the functional ODC homodimer, and targets the monomers for ubiquitin-independent proteolytic destruction by the 26S proteasome. Triggers ODC degradation by inducing the exposure of a cryptic proteasome-interacting surface of ODC. Stabilizes AZIN2 by interfering with its ubiquitination. Also inhibits cellular uptake of polyamines by inactivating the polyamine uptake transporter. SMAD1/OAZ1/PSMB4 complex mediates the degradation of the CREBBP/EP300 repressor SNIP1. Involved in the translocation of AZIN2 from ER-Golgi intermediate compartment (ERGIC) to the cytosol. This is Ornithine decarboxylase antizyme 1 (OAZ1) from Mesocricetus auratus (Golden hamster).